Reading from the N-terminus, the 340-residue chain is MNICVNSLYRLSTPQFHSLYSEEVSDETLALLIGEVENGNQNCIDLLCNLALRNDNLGHKVEKLLFDLFSGKRSGSPDIDKKINQACLVLHQIANNDITKNNTEWKKLHAPSRLLYMAGSATTDLSKKIEIAHKIMGDQFAQTDQEQVGVENLWCGARMLSSDELAAATQGLAQESPLLSVNYPIGLIHPTTKENILSTQLLEKIAQSGLSHNEVFLVNTGDHWLLCLFYKLAEKIKCLIFNTYYDLNENTKQEIIEAAKIAGISENEDIDFIETNLQNNVPNGCGLFCYHTIQLLSNAGQNDPATTLREFAENFLTLSVEEQTLFNTQTRRQIYEYSLQ.

His223 is a catalytic residue. Cys285 (nucleophile) is an active-site residue.

The protein belongs to the peptidase C79 family.

It localises to the secreted. Its subcellular location is the host cytoplasm. Functionally, effector proteins function to alter host cell physiology and promote bacterial survival in host tissues. This protease targets the host cell ubiquitin pathway by acting as a deubiquitinase in infected host cells. The protein is Deubiquitinase SseL (sseL) of Salmonella paratyphi A (strain ATCC 9150 / SARB42).